A 386-amino-acid polypeptide reads, in one-letter code: Phosphoglycerate kinase (386 aa).

Substrate contacts are provided by residues 21–23 (DLN), Arg-36, 59–62 (HLGR), Arg-112, and Arg-145. Residues Lys-196, Glu-313, and 339 to 342 (GGDT) each bind ATP.

This sequence belongs to the phosphoglycerate kinase family. Monomer.

It is found in the cytoplasm. It carries out the reaction (2R)-3-phosphoglycerate + ATP = (2R)-3-phospho-glyceroyl phosphate + ADP. The protein operates within carbohydrate degradation; glycolysis; pyruvate from D-glyceraldehyde 3-phosphate: step 2/5. This is Phosphoglycerate kinase from Haemophilus influenzae (strain 86-028NP).